Reading from the N-terminus, the 130-residue chain is Small ribosomal subunit protein uS9 (130 aa).

It belongs to the universal ribosomal protein uS9 family.

This chain is Small ribosomal subunit protein uS9, found in Bacillus licheniformis (strain ATCC 14580 / DSM 13 / JCM 2505 / CCUG 7422 / NBRC 12200 / NCIMB 9375 / NCTC 10341 / NRRL NRS-1264 / Gibson 46).